A 339-amino-acid polypeptide reads, in one-letter code: Protein RecA (339 aa).

66-73 (GPESSGKT) contributes to the ATP binding site.

It belongs to the RecA family.

It is found in the cytoplasm. Can catalyze the hydrolysis of ATP in the presence of single-stranded DNA, the ATP-dependent uptake of single-stranded DNA by duplex DNA, and the ATP-dependent hybridization of homologous single-stranded DNAs. It interacts with LexA causing its activation and leading to its autocatalytic cleavage. The chain is Protein RecA from Geobacter metallireducens (strain ATCC 53774 / DSM 7210 / GS-15).